Here is a 158-residue protein sequence, read N- to C-terminus: Putative peptidoglycan-binding-like protein (158 aa).

The first 24 residues, 1–24 (MRSPKVKFLTIFTFCIFITKMSFA), serve as a signal peptide directing secretion.

Belongs to the IagB/IpgF/P19 family.

The protein resides in the periplasm. The sequence is that of Putative peptidoglycan-binding-like protein (pbl) from Escherichia coli (strain K12).